The following is a 110-amino-acid chain: UPF0339 protein YegP (110 aa).

Tandem repeats lie at residues 10-58 (SSDN…RYEK) and 61-109 (ASNG…VKDN).

This sequence belongs to the UPF0339 family. Duplicated subfamily.

In Escherichia coli O6:H1 (strain CFT073 / ATCC 700928 / UPEC), this protein is UPF0339 protein YegP (yegP).